Reading from the N-terminus, the 300-residue chain is Epimerase family protein SAR0825 (300 aa).

Belongs to the NAD(P)-dependent epimerase/dehydratase family. SDR39U1 subfamily.

This Staphylococcus aureus (strain MRSA252) protein is Epimerase family protein SAR0825.